We begin with the raw amino-acid sequence, 277 residues long: GPALPP motifs-containing protein 1 (277 aa).

The segment at 1 to 240 (MARDLIGPAL…VWTDTPADRE (240 aa)) is disordered. Alanine 2 is modified (N-acetylalanine). Positions 7-12 (GPALPP) match the GPALPP motif 1 motif. Serine 28 bears the Phosphoserine mark. The GPALPP motif 2 signature appears at 32–37 (GPALPP). 2 stretches are compositionally biased toward acidic residues: residues 60–69 (GNQESEEDDT) and 81–90 (DDDDDDDDEG). The GPALPP motif 3 motif lies at 93–98 (GPALPP). Serine 106 bears the Phosphoserine mark. A compositionally biased stretch (pro residues) spans 108–117 (PRPMIGPALP). The short motif at 113-118 (GPALPP) is the GPALPP motif 4 element. 2 positions are modified to phosphoserine: serine 138 and serine 143. At threonine 147 the chain carries Phosphothreonine. Phosphoserine is present on residues serine 149 and serine 150. Basic and acidic residues predominate over residues 172–196 (EFEKRAQRMKEKLTKGDDDSSKPIT).

The sequence is that of GPALPP motifs-containing protein 1 (GPALPP1) from Bos taurus (Bovine).